The following is a 327-amino-acid chain: Movement protein (327 aa).

A coiled-coil region spans residues serine 297–glutamate 327.

This sequence belongs to the caulimoviridae movement protein family. Homotrimer, through the coiled-coil domain. Interacts with VAP. May interact (via N-terminus) with host prenylated Rab acceptor protein 1D (PRA1D).

It localises to the host cell junction. Its subcellular location is the host plasmodesma. Functionally, transports viral genome to neighboring plant cells directly through plasmosdesmata, without any budding. The movement protein allows efficient cell to cell propagation, by bypassing the host cell wall barrier. Acts by forming tubules structures that increase the size exclusion limit (SEL) of plasmodesmata, thereby allowing viral ribonucleocapsids to spread directly to neighboring cells. In Arabidopsis thaliana (Mouse-ear cress), this protein is Movement protein.